The chain runs to 220 residues: Small ribosomal subunit protein uS5 (220 aa).

A disordered region spans residues 1–39; it reads MAEQPAGQAGTTDNRDARGDREGRRRDSGRGSRERDGEK. Positions 13–39 are enriched in basic and acidic residues; it reads DNRDARGDREGRRRDSGRGSRERDGEK. An S5 DRBM domain is found at 42 to 105; the sequence is YLERVVAINR…EEARKSFFRV (64 aa).

The protein belongs to the universal ribosomal protein uS5 family. As to quaternary structure, part of the 30S ribosomal subunit. Contacts proteins S4 and S8.

In terms of biological role, with S4 and S12 plays an important role in translational accuracy. Its function is as follows. Located at the back of the 30S subunit body where it stabilizes the conformation of the head with respect to the body. The sequence is that of Small ribosomal subunit protein uS5 from Mycobacterium bovis (strain ATCC BAA-935 / AF2122/97).